We begin with the raw amino-acid sequence, 359 residues long: 3-dehydroquinate synthase (359 aa).

Residues D70–K75, G105–D109, T129–T130, K142, K151, and F169–T172 each bind NAD(+). Zn(2+)-binding residues include E184, H247, and H264.

The protein belongs to the sugar phosphate cyclases superfamily. Dehydroquinate synthase family. The cofactor is Co(2+). Zn(2+) is required as a cofactor. Requires NAD(+) as cofactor.

Its subcellular location is the cytoplasm. The enzyme catalyses 7-phospho-2-dehydro-3-deoxy-D-arabino-heptonate = 3-dehydroquinate + phosphate. Its pathway is metabolic intermediate biosynthesis; chorismate biosynthesis; chorismate from D-erythrose 4-phosphate and phosphoenolpyruvate: step 2/7. Catalyzes the conversion of 3-deoxy-D-arabino-heptulosonate 7-phosphate (DAHP) to dehydroquinate (DHQ). In Francisella tularensis subsp. tularensis (strain FSC 198), this protein is 3-dehydroquinate synthase.